The chain runs to 341 residues: Glycerol-3-phosphate dehydrogenase [NAD(P)+] (341 aa).

4 residues coordinate NADPH: Ser-15, Trp-16, Arg-36, and Lys-110. Positions 110, 139, and 141 each coordinate sn-glycerol 3-phosphate. Ala-143 provides a ligand contact to NADPH. The sn-glycerol 3-phosphate site is built by Lys-194, Asp-247, Ser-257, Arg-258, and Asn-259. Lys-194 acts as the Proton acceptor in catalysis. Position 258 (Arg-258) interacts with NADPH. NADPH-binding residues include Val-282 and Glu-284.

Belongs to the NAD-dependent glycerol-3-phosphate dehydrogenase family.

The protein localises to the cytoplasm. It carries out the reaction sn-glycerol 3-phosphate + NAD(+) = dihydroxyacetone phosphate + NADH + H(+). The catalysed reaction is sn-glycerol 3-phosphate + NADP(+) = dihydroxyacetone phosphate + NADPH + H(+). It functions in the pathway membrane lipid metabolism; glycerophospholipid metabolism. Catalyzes the reduction of the glycolytic intermediate dihydroxyacetone phosphate (DHAP) to sn-glycerol 3-phosphate (G3P), the key precursor for phospholipid synthesis. The protein is Glycerol-3-phosphate dehydrogenase [NAD(P)+] of Xanthomonas oryzae pv. oryzae (strain MAFF 311018).